The following is a 260-amino-acid chain: Fibronectin type III domain-containing protein 5 (260 aa).

The interval 1–56 (MQAARGGAGRPERPGRPGRGPERERERPPGAGAASPCAAPGLPAGGATIHPGSPSA) is disordered. The segment covering 10–28 (RPERPGRPGRGPERERERP) has biased composition (basic and acidic residues). Residues 29 to 56 (PGAGAASPCAAPGLPAGGATIHPGSPSA) show a composition bias toward low complexity. Residues 84–175 (APVNVTVRHL…EPVLFKTPRE (92 aa)) enclose the Fibronectin type-III domain. N-linked (GlcNAc...) asparagine glycans are attached at residues Asn-87 and Asn-132. The helical transmembrane segment at 201–221 (GEVLIIVVVLFMWAGVIALFC) threads the bilayer. The segment covering 230–241 (NEPNNNKEKTKS) has biased composition (basic and acidic residues). A disordered region spans residues 230-260 (NEPNNNKEKTKSASETSTPEHQGGGLLRSKI). Residues 251-260 (QGGGLLRSKI) are compositionally biased toward gly residues. The Microbody targeting signal motif lies at 258–260 (SKI).

In terms of assembly, dimer; may exist in other oligomeric forms. The extracellular domain is cleaved and released from the cell membrane. In terms of processing, N-Glycosylated. Widely expressed, with highest levels in heart. Very low expression, if any, in colon, pancreas and spleen.

It localises to the cell membrane. It is found in the peroxisome membrane. The protein resides in the secreted. In terms of biological role, mediates beneficial effects of muscular exercise. Induces browning of white adipose tissue by stimulating UCP1 expression, at least in part, via the nuclear receptor PPARA. The polypeptide is Fibronectin type III domain-containing protein 5 (FNDC5) (Homo sapiens (Human)).